Here is a 395-residue protein sequence, read N- to C-terminus: S-adenosylmethionine synthase 5 (395 aa).

Glutamate 10 contacts Mg(2+). Histidine 16 lines the ATP pocket. Residue glutamate 44 participates in K(+) binding. 2 residues coordinate L-methionine: glutamate 57 and glutamine 100. Residues 168 to 170 (DGK), 236 to 239 (SGRF), aspartate 247, 253 to 254 (RK), alanine 270, lysine 274, and lysine 278 each bind ATP. Aspartate 247 is a binding site for L-methionine. Lysine 278 lines the L-methionine pocket.

It belongs to the AdoMet synthase family. As to quaternary structure, homotetramer. The cofactor is Mn(2+). Requires Mg(2+) as cofactor. Co(2+) is required as a cofactor. K(+) serves as cofactor.

It localises to the cytoplasm. It carries out the reaction L-methionine + ATP + H2O = S-adenosyl-L-methionine + phosphate + diphosphate. It functions in the pathway amino-acid biosynthesis; S-adenosyl-L-methionine biosynthesis; S-adenosyl-L-methionine from L-methionine: step 1/1. Functionally, catalyzes the formation of S-adenosylmethionine from methionine and ATP. The reaction comprises two steps that are both catalyzed by the same enzyme: formation of S-adenosylmethionine (AdoMet) and triphosphate, and subsequent hydrolysis of the triphosphate. The protein is S-adenosylmethionine synthase 5 (METK5) of Populus trichocarpa (Western balsam poplar).